Consider the following 326-residue polypeptide: GTP 3',8-cyclase (326 aa).

Positions 5–227 (GHGRTVDYLR…ALGREGASPS (223 aa)) constitute a Radical SAM core domain. Position 14 (R14) interacts with GTP. [4Fe-4S] cluster is bound by residues C21 and C25. Y27 is a binding site for S-adenosyl-L-methionine. C28 lines the [4Fe-4S] cluster pocket. R64 is a binding site for GTP. Residue G68 participates in S-adenosyl-L-methionine binding. T95 contributes to the GTP binding site. S119 provides a ligand contact to S-adenosyl-L-methionine. A GTP-binding site is contributed by K155. Position 189 (M189) interacts with S-adenosyl-L-methionine. [4Fe-4S] cluster is bound by residues C250 and C253. Residue 255-257 (RIR) participates in GTP binding. C267 provides a ligand contact to [4Fe-4S] cluster.

This sequence belongs to the radical SAM superfamily. MoaA family. Monomer and homodimer. [4Fe-4S] cluster is required as a cofactor.

The enzyme catalyses GTP + AH2 + S-adenosyl-L-methionine = (8S)-3',8-cyclo-7,8-dihydroguanosine 5'-triphosphate + 5'-deoxyadenosine + L-methionine + A + H(+). It participates in cofactor biosynthesis; molybdopterin biosynthesis. Functionally, catalyzes the cyclization of GTP to (8S)-3',8-cyclo-7,8-dihydroguanosine 5'-triphosphate. In Sulfurovum sp. (strain NBC37-1), this protein is GTP 3',8-cyclase.